Here is a 434-residue protein sequence, read N- to C-terminus: Nicotinate phosphoribosyltransferase (434 aa).

At H242 the chain carries Phosphohistidine; by autocatalysis.

Belongs to the NAPRTase family. In terms of processing, transiently phosphorylated on a His residue during the reaction cycle. Phosphorylation strongly increases the affinity for substrates and increases the rate of nicotinate D-ribonucleotide production. Dephosphorylation regenerates the low-affinity form of the enzyme, leading to product release.

It carries out the reaction nicotinate + 5-phospho-alpha-D-ribose 1-diphosphate + ATP + H2O = nicotinate beta-D-ribonucleotide + ADP + phosphate + diphosphate. It functions in the pathway cofactor biosynthesis; NAD(+) biosynthesis; nicotinate D-ribonucleotide from nicotinate: step 1/1. In terms of biological role, catalyzes the synthesis of beta-nicotinate D-ribonucleotide from nicotinate and 5-phospho-D-ribose 1-phosphate at the expense of ATP. In Bradyrhizobium sp. (strain BTAi1 / ATCC BAA-1182), this protein is Nicotinate phosphoribosyltransferase.